The sequence spans 237 residues: Phosphoribosylaminoimidazole-succinocarboxamide synthase (237 aa).

It belongs to the SAICAR synthetase family.

It catalyses the reaction 5-amino-1-(5-phospho-D-ribosyl)imidazole-4-carboxylate + L-aspartate + ATP = (2S)-2-[5-amino-1-(5-phospho-beta-D-ribosyl)imidazole-4-carboxamido]succinate + ADP + phosphate + 2 H(+). It functions in the pathway purine metabolism; IMP biosynthesis via de novo pathway; 5-amino-1-(5-phospho-D-ribosyl)imidazole-4-carboxamide from 5-amino-1-(5-phospho-D-ribosyl)imidazole-4-carboxylate: step 1/2. This is Phosphoribosylaminoimidazole-succinocarboxamide synthase from Listeria monocytogenes serovar 1/2a (strain ATCC BAA-679 / EGD-e).